Here is a 307-residue protein sequence, read N- to C-terminus: Bifunctional protein FolD 3 (307 aa).

NADP(+) contacts are provided by residues 169–171, Ser194, and Ile235; that span reads GRS.

This sequence belongs to the tetrahydrofolate dehydrogenase/cyclohydrolase family. Homodimer.

It carries out the reaction (6R)-5,10-methylene-5,6,7,8-tetrahydrofolate + NADP(+) = (6R)-5,10-methenyltetrahydrofolate + NADPH. The enzyme catalyses (6R)-5,10-methenyltetrahydrofolate + H2O = (6R)-10-formyltetrahydrofolate + H(+). It participates in one-carbon metabolism; tetrahydrofolate interconversion. Its function is as follows. Catalyzes the oxidation of 5,10-methylenetetrahydrofolate to 5,10-methenyltetrahydrofolate and then the hydrolysis of 5,10-methenyltetrahydrofolate to 10-formyltetrahydrofolate. This Ectopseudomonas mendocina (strain ymp) (Pseudomonas mendocina) protein is Bifunctional protein FolD 3.